The sequence spans 142 residues: Succinate dehydrogenase subunit 6, mitochondrial (142 aa).

Gly-2 carries the post-translational modification N-acetylglycine.

In terms of assembly, component of complex II composed of eight subunits in plants: four classical SDH subunits SDH1, SDH2, SDH3 and SDH4 (a flavoprotein (FP), an iron-sulfur protein (IP), and a cytochrome b composed of a large and a small subunit.), as well as four subunits unknown in mitochondria from bacteria and heterotrophic eukaryotes.

The protein localises to the mitochondrion inner membrane. Its pathway is carbohydrate metabolism; tricarboxylic acid cycle. In Arabidopsis thaliana (Mouse-ear cress), this protein is Succinate dehydrogenase subunit 6, mitochondrial.